We begin with the raw amino-acid sequence, 329 residues long: NADH-quinone oxidoreductase subunit H (329 aa).

8 helical membrane passes run 9-29, 79-99, 117-137, 162-182, 188-208, 243-263, 269-289, and 309-329; these read ILKVLVVVAIFSALAGFLTYV, IAPVISAATAFIAMSAVPFFP, VGILFVLGVGAVGMYGPLLAG, VSGLSILAPLMMVGSLSLIEI, GGIFDWLVWSQPLAFLLFLIA, FFIGEYANMITLAFLVVLLFF, LWFIPGGIAILLKVAVFLFLF, and WKVLMPLALLNIVLTGIVLIL.

This sequence belongs to the complex I subunit 1 family. NDH-1 is composed of 14 different subunits. Subunits NuoA, H, J, K, L, M, N constitute the membrane sector of the complex.

It localises to the cell inner membrane. It carries out the reaction a quinone + NADH + 5 H(+)(in) = a quinol + NAD(+) + 4 H(+)(out). Its function is as follows. NDH-1 shuttles electrons from NADH, via FMN and iron-sulfur (Fe-S) centers, to quinones in the respiratory chain. The immediate electron acceptor for the enzyme in this species is believed to be ubiquinone. Couples the redox reaction to proton translocation (for every two electrons transferred, four hydrogen ions are translocated across the cytoplasmic membrane), and thus conserves the redox energy in a proton gradient. This subunit may bind ubiquinone. The protein is NADH-quinone oxidoreductase subunit H of Wolinella succinogenes (strain ATCC 29543 / DSM 1740 / CCUG 13145 / JCM 31913 / LMG 7466 / NCTC 11488 / FDC 602W) (Vibrio succinogenes).